The chain runs to 1657 residues: Androglobin (1657 aa).

Positions 1-11 are enriched in basic residues; sequence MASKQAKRKEV. Disordered regions lie at residues 1 to 40 and 321 to 398; these read MASK…SFEQ and TKEN…SSDV. In terms of domain architecture, Calpain catalytic spans 70 to 402; the sequence is KDKTAKSPIF…RPSSDVQYSM (333 aa). Residues 321 to 386 are compositionally biased toward basic and acidic residues; the sequence is TKENKDGKDG…DGEKEKEKFK (66 aa). Residues 762–889 enclose the Globin; C-terminal part domain; the sequence is HVCSMTTFVI…EDVSLAEWVD (128 aa). Residues glutamine 791 and histidine 823 each coordinate heme b. Residues 905 to 934 form the IQ domain; it reads EIAAAVKIQSMWKGCYVRLLMKARKPETKE. A Globin; N-terminal part domain is found at 935-967; that stretch reads NVTVADTLQKIWAVLEMNLEQYALSLLRLMFKS. Disordered regions lie at residues 1184–1226, 1288–1356, 1422–1459, and 1638–1657; these read SKQV…TDTG, KHEE…QEDP, TTDT…ADIK, and IEKK…GKKK. The span at 1321–1336 shows a compositional bias: basic and acidic residues; the sequence is EKSAEKEKLAKEKQAP. 2 stretches are compositionally biased toward polar residues: residues 1341-1351 and 1422-1443; these read QQVQMPTAVHS and TTDT…SQTK. Positions 1585-1640 form a coiled coil; that stretch reads DEVLEMYGEMRDSVDEARQKILDIREVYRNKLLEAERLRMEALAAQEAAVKIEIEK.

It in the central section; belongs to the globin family. This sequence in the N-terminal section; belongs to the peptidase C2 family. As to quaternary structure, interacts with septin SEPT10; contributes to in vitro proteolytic cleavage of SEPT10 in a calmodulin-dependent manner. Interacts with CFAP69. Interacts with SPEF2. May interact with calmodulin. Strongly expressed in testis and lung. Weakly expressed in heart, brain, spleen, kidney and tongue.

It localises to the cell projection. It is found in the cilium. The protein localises to the flagellum. Probable chimeric globin with a bis-histidyl six-coordinate heme-iron atom through which it could bind dioxygen, carbon monoxide and nitric oxide. Required for sperm flagellum formation and maturation of elongating spermatids, thus playing an essential role in male fertility. This chain is Androglobin, found in Mus musculus (Mouse).